The sequence spans 359 residues: tRNA-specific 2-thiouridylase MnmA (359 aa).

Residues 7 to 14 and methionine 33 each bind ATP; that span reads AMSGGVDS. The active-site Nucleophile is cysteine 101. Cysteine 101 and cysteine 198 form a disulfide bridge. Glycine 125 contacts ATP. The interval 148-150 is interaction with tRNA; that stretch reads KDQ. The active-site Cysteine persulfide intermediate is the cysteine 198.

The protein belongs to the MnmA/TRMU family.

The protein localises to the cytoplasm. The enzyme catalyses S-sulfanyl-L-cysteinyl-[protein] + uridine(34) in tRNA + AH2 + ATP = 2-thiouridine(34) in tRNA + L-cysteinyl-[protein] + A + AMP + diphosphate + H(+). Its function is as follows. Catalyzes the 2-thiolation of uridine at the wobble position (U34) of tRNA, leading to the formation of s(2)U34. In Chloroflexus aggregans (strain MD-66 / DSM 9485), this protein is tRNA-specific 2-thiouridylase MnmA.